A 514-amino-acid polypeptide reads, in one-letter code: MRGGPCGGYPRRMTAIPDSTVGTNTAVAGLESTFADELGALTVPWQGAHAPDPTLLVLNEQLAASLRLDVQTLRSEDGVGVLSGSTAPAGAKPVAMAYAGHQFGGYAPLLGDGRALLLGELTSSDGQRVDLHLKGSGPTPFSRGGDGFAVIGPMLREYLVSEAMYALGIPTTRALSVVATGQNVHRYGAEPGAVLARVAASHLRVGTFEYAVRQGEVLQPLADYAIARHYPELTELPPGRDGNRYLSFFEAVVEAQASLVAKWMLTGFVHGVMNTDNTTISGETIDYGPCAFLDAFDPAAVFSSIDHGGRYAFGNQPVVLKWNLARLAETLLTLFDSTPDDAITAVSAVLATFDERYDGHYAAGMAAKLGLAGELVDRALVDDLLTLLEEHGADWTGTFRALADELRGHSTPLDGLVPREHIGPWLERWRGDLTKHGRGAAETADAMDCVNPLYIPRNHQLDAALRAATDGRLAPFEKLLEVVTHPFDRRDEWSDYTTPAPPSFSKSFQTFCGT.

Glycine 111, glycine 113, arginine 114, lysine 134, aspartate 146, glycine 147, arginine 197, and arginine 204 together coordinate ATP. The active-site Proton acceptor is aspartate 276. Residues asparagine 277 and aspartate 286 each contribute to the Mg(2+) site. Position 286 (aspartate 286) interacts with ATP.

Belongs to the SELO family. Requires Mg(2+) as cofactor. The cofactor is Mn(2+).

It carries out the reaction L-seryl-[protein] + ATP = 3-O-(5'-adenylyl)-L-seryl-[protein] + diphosphate. The catalysed reaction is L-threonyl-[protein] + ATP = 3-O-(5'-adenylyl)-L-threonyl-[protein] + diphosphate. The enzyme catalyses L-tyrosyl-[protein] + ATP = O-(5'-adenylyl)-L-tyrosyl-[protein] + diphosphate. It catalyses the reaction L-histidyl-[protein] + UTP = N(tele)-(5'-uridylyl)-L-histidyl-[protein] + diphosphate. It carries out the reaction L-seryl-[protein] + UTP = O-(5'-uridylyl)-L-seryl-[protein] + diphosphate. The catalysed reaction is L-tyrosyl-[protein] + UTP = O-(5'-uridylyl)-L-tyrosyl-[protein] + diphosphate. In terms of biological role, nucleotidyltransferase involved in the post-translational modification of proteins. It can catalyze the addition of adenosine monophosphate (AMP) or uridine monophosphate (UMP) to a protein, resulting in modifications known as AMPylation and UMPylation. The protein is Protein nucleotidyltransferase YdiU of Rhodococcus jostii (strain RHA1).